The following is a 181-amino-acid chain: Segregation and condensation protein B (181 aa).

The protein belongs to the ScpB family. Homodimer. Homodimerization may be required to stabilize the binding of ScpA to the Smc head domains. Component of a cohesin-like complex composed of ScpA, ScpB and the Smc homodimer, in which ScpA and ScpB bind to the head domain of Smc. The presence of the three proteins is required for the association of the complex with DNA.

The protein resides in the cytoplasm. Functionally, participates in chromosomal partition during cell division. May act via the formation of a condensin-like complex containing Smc and ScpA that pull DNA away from mid-cell into both cell halves. The chain is Segregation and condensation protein B from Desulforamulus reducens (strain ATCC BAA-1160 / DSM 100696 / MI-1) (Desulfotomaculum reducens).